The following is a 389-amino-acid chain: GDP-fucose protein O-fucosyltransferase 1 (389 aa).

Positions Met1–Ala21 are cleaved as a signal peptide. Asn24 carries an N-linked (GlcNAc...) asparagine glycan. A disulfide bridge links Cys35 with Cys37. Arg40 to Asn43 is a binding site for substrate. Cys119 and Cys135 are disulfide-bonded. His238 to Arg240 contributes to the substrate binding site. 2 disulfide bridges follow: Cys249-Cys281 and Cys266-Cys353. Thr356–Phe357 is a substrate binding site.

It belongs to the glycosyltransferase 65 family. Monomer.

The protein resides in the endoplasmic reticulum. It carries out the reaction L-seryl-[protein] + GDP-beta-L-fucose = 3-O-(alpha-L-fucosyl)-L-seryl-[protein] + GDP + H(+). It catalyses the reaction L-threonyl-[protein] + GDP-beta-L-fucose = 3-O-(alpha-L-fucosyl)-L-threonyl-[protein] + GDP + H(+). The protein operates within protein modification; protein glycosylation. Catalyzes the reaction that attaches fucose through an O-glycosidic linkage to a conserved serine or threonine residue found in the consensus sequence C2-X(4,5)-[S/T]-C3 of EGF domains, where C2 and C3 are the second and third conserved cysteines. Specifically uses GDP-fucose as donor substrate and proper disulfide pairing of the substrate EGF domains is required for fucose transfer. The protein is GDP-fucose protein O-fucosyltransferase 1 of Caenorhabditis elegans.